The following is a 221-amino-acid chain: Probable molybdenum cofactor guanylyltransferase (221 aa).

GTP contacts are provided by residues 17–19 (LAG), K29, D74, and D103. Mg(2+) is bound at residue D103.

It belongs to the MobA family. The cofactor is Mg(2+).

Its subcellular location is the cytoplasm. The enzyme catalyses Mo-molybdopterin + GTP + H(+) = Mo-molybdopterin guanine dinucleotide + diphosphate. In terms of biological role, transfers a GMP moiety from GTP to Mo-molybdopterin (Mo-MPT) cofactor (Moco or molybdenum cofactor) to form Mo-molybdopterin guanine dinucleotide (Mo-MGD) cofactor. This chain is Probable molybdenum cofactor guanylyltransferase, found in Peptoclostridium acidaminophilum (Eubacterium acidaminophilum).